Consider the following 490-residue polypeptide: N-succinylglutamate 5-semialdehyde dehydrogenase (490 aa).

NAD(+) is bound at residue 220–225 (GSANTG). Active-site residues include Glu243 and Cys277.

The protein belongs to the aldehyde dehydrogenase family. AstD subfamily.

It catalyses the reaction N-succinyl-L-glutamate 5-semialdehyde + NAD(+) + H2O = N-succinyl-L-glutamate + NADH + 2 H(+). The protein operates within amino-acid degradation; L-arginine degradation via AST pathway; L-glutamate and succinate from L-arginine: step 4/5. Its function is as follows. Catalyzes the NAD-dependent reduction of succinylglutamate semialdehyde into succinylglutamate. The sequence is that of N-succinylglutamate 5-semialdehyde dehydrogenase from Shigella dysenteriae serotype 1 (strain Sd197).